A 439-amino-acid chain; its full sequence is Rho GTPase-activating protein 1 (439 aa).

The residue at position 1 (M1) is an N-acetylmethionine. Basic and acidic residues predominate over residues I28 to K48. The tract at residues I28–P52 is disordered. S44, S47, S50, and S51 each carry phosphoserine. Positions P63–K218 constitute a CRAL-TRIO domain. Phosphotyrosine is present on Y65. K80 is subject to N6-acetyllysine. The SH3-binding motif lies at P228–P238. Positions V244–F431 constitute a Rho-GAP domain.

As to quaternary structure, found in a complex with XPO7, EIF4A1, ARHGAP1, VPS26A, VPS29, VPS35 and SFN. Interacts with BNIPL. As to expression, ubiquitous.

It is found in the cytoplasm. Its function is as follows. GTPase activator for the Rho, Rac and Cdc42 proteins, converting them to the putatively inactive GDP-bound state. Cdc42 seems to be the preferred substrate. This chain is Rho GTPase-activating protein 1 (ARHGAP1), found in Homo sapiens (Human).